A 447-amino-acid polypeptide reads, in one-letter code: Tubulin beta chain (447 aa).

8 residues coordinate GTP: Q11, E69, S138, G142, T143, G144, N204, and N226. E69 contacts Mg(2+). Residues 425–447 (YQDASISEGEEEYEEEVPIEGEE) are disordered. Positions 432–447 (EGEEEYEEEVPIEGEE) are enriched in acidic residues.

It belongs to the tubulin family. Dimer of alpha and beta chains. A typical microtubule is a hollow water-filled tube with an outer diameter of 25 nm and an inner diameter of 15 nM. Alpha-beta heterodimers associate head-to-tail to form protofilaments running lengthwise along the microtubule wall with the beta-tubulin subunit facing the microtubule plus end conferring a structural polarity. Microtubules usually have 13 protofilaments but different protofilament numbers can be found in some organisms and specialized cells. Requires Mg(2+) as cofactor.

The protein localises to the cytoplasm. Its subcellular location is the cytoskeleton. Functionally, tubulin is the major constituent of microtubules, a cylinder consisting of laterally associated linear protofilaments composed of alpha- and beta-tubulin heterodimers. Microtubules grow by the addition of GTP-tubulin dimers to the microtubule end, where a stabilizing cap forms. Below the cap, tubulin dimers are in GDP-bound state, owing to GTPase activity of alpha-tubulin. The sequence is that of Tubulin beta chain (tubA) from Botryotinia fuckeliana (Noble rot fungus).